Reading from the N-terminus, the 84-residue chain is Neurotoxin BmK-M10 (84 aa).

The first 19 residues, 1-19 (MNYLVMISFALLLMKGVES), serve as a signal peptide directing secretion. The region spanning 21 to 83 (RDAYIAKPEN…VPIRVPGKCQ (63 aa)) is the LCN-type CS-alpha/beta domain. 4 disulfide bridges follow: C31-C82, C35-C55, C41-C65, and C45-C67. Position 84 (R84) is a propeptide, removed by a carboxypeptidase.

As to expression, expressed by the venom gland.

The protein resides in the secreted. Binds to voltage-dependent sodium channels (Nav) and voltage-dependent delayed rectifier potassium channels and inhibits the inactivation of the activated channels, thereby blocking neuronal transmission. Administration to mice at a dosage of 0.8 mg/kg produces an analgesic effect. The polypeptide is Neurotoxin BmK-M10 (Olivierus martensii (Manchurian scorpion)).